We begin with the raw amino-acid sequence, 363 residues long: Type 3 secretion system translocon protein SctB (363 aa).

Over residues 1-16 the composition is skewed to polar residues; it reads MEIQNTKPTQTLYTDI. Residues 1–30 are disordered; sequence MEIQNTKPTQTLYTDISTKQTQSSSETQKS. The segment covering 17–30 has biased composition (low complexity); it reads STKQTQSSSETQKS. The interval 33-73 is ipgC chaperone binding domain; that stretch reads YQQIAAHIPLNVGKNPVLTTTLNDDQLLKLSEQVQHDSEII. A helical transmembrane segment spans residues 99 to 120; sequence ISSLSSNAVSLIISVAVLLSAL.

It belongs to the SctB/SipC family. In terms of assembly, the core secretion machinery of the T3SS is composed of approximately 20 different proteins, including cytoplasmic components, a base, an export apparatus and a needle. This subunit is involved in the formation of a pore, called the translocon, in host membrane. Interacts with IpaB/SctE. Interacts with the molecular chaperone IpgC, which prevents premature association with IpaB/SctE within the cytoplasm of Shigella cells. Does not interact with CDC42 or RAC1 GTPases in vitro.

The protein localises to the secreted. Its subcellular location is the host membrane. With respect to regulation, interaction with the membrane is affected by the pH. Its function is as follows. Component of the type III secretion system (T3SS), also called injectisome, which is used to inject bacterial effector proteins into eukaryotic host cells. IpaB/SctE and IpaC/SctB are inserted into the host membrane where they form a pore and allow the translocation of effector proteins into the cytosol of target cells. Induction and secretion of IpaC/SctB comprise the final step in triggering the induction of full type III secretion. In terms of biological role, required for efficient dissemination. Necessary for lysis of the two cellular membranes that surround bacteria in protrusions during cell-to-cell spread. Contribute to actin nucleation in vitro, which may be a necessary step in Shigella invasion. This chain is Type 3 secretion system translocon protein SctB, found in Shigella flexneri.